The chain runs to 919 residues: TRPM8 channel-associated factor 2 (919 aa).

The Peptidase M60 domain occupies 542-841 (DCWVSTGLYL…TYLQLQEAFG (300 aa)).

It belongs to the TCAF family. In terms of assembly, isoform 2 interacts with TRPM8 (via N-terminus and C-terminus domains); the interaction inhibits TRPM8 channel activity. Interacts with TRPV6. In terms of tissue distribution, isoform 2 is expressed in the prostate and in cancerous prostate samples.

The protein localises to the cell membrane. In terms of biological role, negatively regulates the plasma membrane cation channel TRPM8 activity. Involved in the recruitment of TRPM8 to the cell surface. Promotes prostate cancer cell migration stimulation in a TRPM8-dependent manner. This is TRPM8 channel-associated factor 2 from Homo sapiens (Human).